The chain runs to 122 residues: Large ribosomal subunit protein uL14 (122 aa).

The protein belongs to the universal ribosomal protein uL14 family. Part of the 50S ribosomal subunit. Forms a cluster with proteins L3 and L19. In the 70S ribosome, L14 and L19 interact and together make contacts with the 16S rRNA in bridges B5 and B8.

Functionally, binds to 23S rRNA. Forms part of two intersubunit bridges in the 70S ribosome. This is Large ribosomal subunit protein uL14 from Allorhizobium ampelinum (strain ATCC BAA-846 / DSM 112012 / S4) (Agrobacterium vitis (strain S4)).